The chain runs to 425 residues: Inositol hexakisphosphate kinase 2 (425 aa).

Residues 206–208 (ENL) and Asp-219 each bind ATP. Residues 215-223 (PCVLDLKMG), Lys-221, and 235-242 (KAANQIRK) each bind substrate. An ATP-binding site is contributed by Asp-382. His-385 lines the substrate pocket.

This sequence belongs to the inositol phosphokinase (IPK) family. In terms of tissue distribution, detected in kidney, intestine, liver and heart.

The protein resides in the nucleus. The enzyme catalyses 1D-myo-inositol hexakisphosphate + ATP = 5-diphospho-1D-myo-inositol 1,2,3,4,6-pentakisphosphate + ADP. The protein operates within phospholipid metabolism; phosphatidylinositol metabolism. Its function is as follows. Converts inositol hexakisphosphate (InsP6) to diphosphoinositol pentakisphosphate (InsP7/PP-InsP5). The protein is Inositol hexakisphosphate kinase 2 (IP6K2) of Oryctolagus cuniculus (Rabbit).